The primary structure comprises 156 residues: Endoribonuclease YbeY (156 aa).

Zn(2+) is bound by residues His-119, His-123, and His-129.

This sequence belongs to the endoribonuclease YbeY family. It depends on Zn(2+) as a cofactor.

The protein resides in the cytoplasm. In terms of biological role, single strand-specific metallo-endoribonuclease involved in late-stage 70S ribosome quality control and in maturation of the 3' terminus of the 16S rRNA. The polypeptide is Endoribonuclease YbeY (Buchnera aphidicola subsp. Cinara cedri (strain Cc)).